The sequence spans 274 residues: Large ribosomal subunit protein uL2 (274 aa).

The tract at residues 223–274 (VAMNPVDHPHGGGEGRTSGGRHPVTPWGVPTKGYKTRSNKRTDKYIVRRRNK) is disordered.

This sequence belongs to the universal ribosomal protein uL2 family. As to quaternary structure, part of the 50S ribosomal subunit. Forms a bridge to the 30S subunit in the 70S ribosome.

Its function is as follows. One of the primary rRNA binding proteins. Required for association of the 30S and 50S subunits to form the 70S ribosome, for tRNA binding and peptide bond formation. It has been suggested to have peptidyltransferase activity; this is somewhat controversial. Makes several contacts with the 16S rRNA in the 70S ribosome. In Shewanella baltica (strain OS223), this protein is Large ribosomal subunit protein uL2.